We begin with the raw amino-acid sequence, 240 residues long: uncharacterized protein (240 aa).

Residues 1–11 (MGMTPRRKRRG) show a composition bias toward basic residues. Positions 1–32 (MGMTPRRKRRGGAVQITRPTGRPRTPTTQTTK) are disordered. Low complexity predominate over residues 17–31 (TRPTGRPRTPTTQTT). Helical transmembrane passes span 36 to 56 (WVVG…VELI), 93 to 113 (LMAN…AGLS), 115 to 135 (FVWA…LIGN), 146 to 166 (IGAS…GLFV), 172 to 192 (IVIG…AMPV), and 198 to 218 (GVSW…AYLL).

It to M.leprae ML1171.

The protein localises to the cell membrane. This is an uncharacterized protein from Mycobacterium tuberculosis (strain CDC 1551 / Oshkosh).